The following is a 132-amino-acid chain: D-ribose pyranase (132 aa).

Residue histidine 20 is the Proton donor of the active site. Substrate contacts are provided by residues aspartate 28, histidine 99, and 121 to 123 (YSN).

It belongs to the RbsD / FucU family. RbsD subfamily. As to quaternary structure, homodecamer.

It localises to the cytoplasm. It catalyses the reaction beta-D-ribopyranose = beta-D-ribofuranose. It participates in carbohydrate metabolism; D-ribose degradation; D-ribose 5-phosphate from beta-D-ribopyranose: step 1/2. In terms of biological role, catalyzes the interconversion of beta-pyran and beta-furan forms of D-ribose. The chain is D-ribose pyranase from Streptococcus agalactiae serotype III (strain NEM316).